The chain runs to 90 residues: Large ribosomal subunit protein bL27 (90 aa).

A disordered region spans residues 1 to 20; sequence MAHKKAGGSSRNGRDSAGKR.

The protein belongs to the bacterial ribosomal protein bL27 family.

The polypeptide is Large ribosomal subunit protein bL27 (Nitrobacter hamburgensis (strain DSM 10229 / NCIMB 13809 / X14)).